The primary structure comprises 247 residues: Small ribosomal subunit protein uS2 (247 aa).

Belongs to the universal ribosomal protein uS2 family.

This chain is Small ribosomal subunit protein uS2, found in Pseudomonas syringae pv. syringae (strain B728a).